Consider the following 222-residue polypeptide: Peroxisomal membrane protein 11-4 (222 aa).

Over 1–81 (MSAGDTLDKL…LNGLRRAPGE (81 aa)) the chain is Cytoplasmic. A helical membrane pass occupies residues 82–102 (FGALAVLANAGEMVYFFFDHF). Over 103-196 (TWLSRVGVLD…IGIADIEPNP (94 aa)) the chain is Lumenal. Residues 197-217 (FCNHAVTLGISGLVSAWAGWY) traverse the membrane as a helical segment. The Cytoplasmic segment spans residues 218-222 (RNWPS).

Belongs to the peroxin-11 family. As to expression, expressed in seedlings, shoots, leaf sheaths and flag leaf.

The protein localises to the peroxisome membrane. Functionally, involved in peroxisomal proliferation. This chain is Peroxisomal membrane protein 11-4 (PEX11-4), found in Oryza sativa subsp. indica (Rice).